Reading from the N-terminus, the 147-residue chain is 3-hydroxyacyl-[acyl-carrier-protein] dehydratase FabZ (147 aa).

H51 is a catalytic residue.

Belongs to the thioester dehydratase family. FabZ subfamily.

Its subcellular location is the cytoplasm. The enzyme catalyses a (3R)-hydroxyacyl-[ACP] = a (2E)-enoyl-[ACP] + H2O. Its function is as follows. Involved in unsaturated fatty acids biosynthesis. Catalyzes the dehydration of short chain beta-hydroxyacyl-ACPs and long chain saturated and unsaturated beta-hydroxyacyl-ACPs. In Anaplasma marginale (strain Florida), this protein is 3-hydroxyacyl-[acyl-carrier-protein] dehydratase FabZ.